The following is a 1270-amino-acid chain: MPEPGKKPVSAFNKKPRSAEVTAGSAAVFEAETERSGVMVRWQRDGSDITANDKYGLAAEGKRHTLTVRDASPDDQGSYAVIAGSSKVKFDLKVTEPAPPEKAESEVAPGAPEEVPAPATELEESVSSPEGSVSVTQDGSAAEHQGAPDDPIGLFLMRPQDGEVTVGGSIVFSARVAGASLLKPPVVKWFKGKWVDLSSKVGQHLQLHDSYDRASKVYLFELHITDAQTTSAGGYRCEVSTKDKFDSCNFNLTVHEAIGSGDLDLRSAFRRTSLAGAGRRTSDSHEDAGTPDFSSLLKKRDSFRRDSKLEAPAEEDVWEILRQAPPSEYERIAFQHGVEACHRPLKRLKGMKQDEKKSTAFQKKLEPAYQVNKGHKIRLTVELADPDAEVKWLKNGQEIQMSGSKYIFESVGAKRTLTISQCSLADDAAYQCVVGGEKCSTELFVKEPPVLITRSLEDQLVMVGQRVEFECEVSEEGAQVKWLKDGVELTREETFKYRFKKDGRKHHLIINEATLEDAGHYAVRTSGGQSLAELIVQEKKLEVYQSIADLAVGAKDQAVFKCEVSDENVRGVWLKNGKELVPDNRIKVSHIGRVHKLTIDDVTPADEADYSFVPEGFACNLSAKLHFMEVKIDFVPRQEPPKIHLDCPGSTPDTIVVVTGNKLRLDVPISGDPAPTVVWQKTVTQGKKASAGPHPDAPEDAGADEEWVFDKKLLCETEGRVRVETTKDRSVFTVEGAEKEDEGVYTVTVKNPVGEDQVNLTVKVIDVPDAPAAPKISNVGEDSCTVQWEPPAYDGGQPVLGYILERKKKKSYRWMRLNFDLLRELSHEARRMIEGVAYEMRVYAVNAVGMSRPSPASQPFMPIGPPGEPTHLAVEDVSDTTVSLKWRPPERVGAGGLDGYSVEYCQEGCSEWTPALQGLTERRSMLVKDLPTGARLLFRVRAHNVAGPGGPIVTKEPVTVQEILQRPRLQLPRHLRQTIQKKVGEPVNLLIPFQGKPRPQVTWTKEGQPLAGEEVSIRNSPTDTILFIRAARRTHSGTYQVTVRIENMEDKATLILQIVDKPSPPQDIRIVETWGFNVALEWKPPQDDGNTEIWGYTVQKADKKTMEWFTVLEHYRRTHCVVSELIIGNGYYFRVFSHNMVGSSDKAAATKEPVFIPRPGITYEPPKYKALDFSEAPSFTQPLANRSIIAGYNAILCCAVRGSPKPKISWFKNGLDLGEDARFRMFCKQGVLTLEIRKPCPYDGGVYVCRATNLQGEAQCECRLEVRVPQ.

Methionine 1 carries the N-acetylmethionine modification. A disordered region spans residues 1-24; the sequence is MPEPGKKPVSAFNKKPRSAEVTAG. A phosphoserine mark is found at serine 47 and serine 72. The span at 94-105 shows a compositional bias: basic and acidic residues; it reads VTEPAPPEKAES. A disordered region spans residues 94–152; sequence VTEPAPPEKAESEVAPGAPEEVPAPATELEESVSSPEGSVSVTQDGSAAEHQGAPDDPI. The segment covering 106 to 135 has biased composition (low complexity); the sequence is EVAPGAPEEVPAPATELEESVSSPEGSVSV. One can recognise an Ig-like C2-type 1 domain in the interval 151 to 254; that stretch reads PIGLFLMRPQ…FDSCNFNLTV (104 aa). Zn(2+) contacts are provided by glutamine 206, histidine 208, glutamate 221, and histidine 223. Phosphoserine; by PKA and PKC occurs at positions 273, 282, and 302. 2 positions are modified to phosphoserine: serine 307 and serine 423. Ig-like C2-type domains follow at residues 358 to 448, 449 to 539, 540 to 629, and 641 to 767; these read STAF…VKEP, PVLI…VQEK, KLEV…HFME, and PKIH…VIDV. An intrachain disulfide couples cysteine 432 to cysteine 439. 2 positions are modified to phosphoserine: serine 455 and serine 546. Residue threonine 603 is modified to Phosphothreonine. Positions 683-702 are disordered; the sequence is VTQGKKASAGPHPDAPEDAG. Fibronectin type-III domains lie at 770–866 and 868–963; these read APAA…IGPP and EPTH…VQEI. The Ig-like C2-type 6 domain occupies 967-1061; sequence PRLQLPRHLR…ATLILQIVDK (95 aa). A Fibronectin type-III 3 domain is found at 1064–1159; it reads PPQDIRIVET…TKEPVFIPRP (96 aa). Residues 1177–1270 form the Ig-like C2-type 7 domain; sequence PSFTQPLANR…ECRLEVRVPQ (94 aa). Omega-N-methylarginine is present on arginine 1237.

The protein belongs to the immunoglobulin superfamily. MyBP family. In terms of processing, substrate for phosphorylation by PKA and PKC. Reversible phosphorylation appears to modulate contraction. Post-translationally, polyubiquitinated.

In terms of biological role, thick filament-associated protein located in the crossbridge region of vertebrate striated muscle a bands. In vitro it binds MHC, F-actin and native thin filaments, and modifies the activity of actin-activated myosin ATPase. It may modulate muscle contraction or may play a more structural role. This Mus musculus (Mouse) protein is Myosin-binding protein C, cardiac-type (Mybpc3).